The primary structure comprises 503 residues: ATP synthase subunit alpha (503 aa).

Residue 169 to 176 coordinates ATP; sequence GDRGTGKT.

The protein belongs to the ATPase alpha/beta chains family. As to quaternary structure, F-type ATPases have 2 components, CF(1) - the catalytic core - and CF(0) - the membrane proton channel. CF(1) has five subunits: alpha(3), beta(3), gamma(1), delta(1), epsilon(1). CF(0) has three main subunits: a(1), b(2) and c(9-12). The alpha and beta chains form an alternating ring which encloses part of the gamma chain. CF(1) is attached to CF(0) by a central stalk formed by the gamma and epsilon chains, while a peripheral stalk is formed by the delta and b chains.

It localises to the cell inner membrane. It carries out the reaction ATP + H2O + 4 H(+)(in) = ADP + phosphate + 5 H(+)(out). Produces ATP from ADP in the presence of a proton gradient across the membrane. The alpha chain is a regulatory subunit. The sequence is that of ATP synthase subunit alpha from Leptospira borgpetersenii serovar Hardjo-bovis (strain L550).